The sequence spans 818 residues: Glycerol-3-phosphate acyltransferase (818 aa).

Positions 305–310 match the HXXXXD motif motif; sequence HRSHMD.

This sequence belongs to the GPAT/DAPAT family.

It is found in the cell inner membrane. It catalyses the reaction sn-glycerol 3-phosphate + an acyl-CoA = a 1-acyl-sn-glycero-3-phosphate + CoA. It functions in the pathway phospholipid metabolism; CDP-diacylglycerol biosynthesis; CDP-diacylglycerol from sn-glycerol 3-phosphate: step 1/3. The protein is Glycerol-3-phosphate acyltransferase of Photorhabdus laumondii subsp. laumondii (strain DSM 15139 / CIP 105565 / TT01) (Photorhabdus luminescens subsp. laumondii).